A 148-amino-acid chain; its full sequence is U2 snRNP component IST3 (148 aa).

Positions 31 to 109 constitute an RRM domain; the sequence is AYIYIGNLNR…RALKIDHTFY (79 aa).

Belongs to the IST3 family. In terms of assembly, component of the 45S U1.U2.U4/U6.U5 penta-snRNP particle, a subcomplex of the spliceosome. Belongs to the CWC complex (or CEF1-associated complex), a spliceosome sub-complex reminiscent of a late-stage spliceosome composed of the U2, U5 and U6 snRNAs and at least BUD13, BUD31, BRR2, CDC40, CEF1, CLF1, CUS1, CWC2, CWC15, CWC21, CWC22, CWC23, CWC24, CWC25, CWC27, ECM2, HSH155, IST3, ISY1, LEA1, MSL1, NTC20, PRP8, PRP9, PRP11, PRP19, PRP21, PRP22, PRP45, PRP46, SLU7, SMB1, SMD1, SMD2, SMD3, SMX2, SMX3, SNT309, SNU114, SPP2, SYF1, SYF2, RSE1 and YJU2. Belongs to the pre-mRNA retention and splicing (RES) complex composed of at least BUD13, IST3 and PML1. Subunit of the U2 snRNP. Interacts with RDS3.

The protein resides in the cytoplasm. Its subcellular location is the nucleus. Required for pre-mRNA splicing and spliceosome assembly. As part of the pre-mRNA retention and splicing (RES) complex, required for nuclear pre-mRNA retention and efficient splicing. Required for MER1-activated splicing. The polypeptide is U2 snRNP component IST3 (IST3) (Saccharomyces cerevisiae (strain ATCC 204508 / S288c) (Baker's yeast)).